Here is a 159-residue protein sequence, read N- to C-terminus: MRITIIAVGKIKEKYLKEGINEYSKRLSRYCKLEIIEVEDEHAPDNLSSLEEQQVKKREAERVVKRLKEGTLLVVLDVRGSKMSSEELARKLESFFISGKSHVTFVIGGSLGIDKELLNMADFSLSLSDMTFPHQLTRLILLEQLYRSFKIINGEPYHR.

Residues L76, G108, and 127–132 each bind S-adenosyl-L-methionine; that span reads LSDMTF.

This sequence belongs to the RNA methyltransferase RlmH family. In terms of assembly, homodimer.

The protein localises to the cytoplasm. It catalyses the reaction pseudouridine(1915) in 23S rRNA + S-adenosyl-L-methionine = N(3)-methylpseudouridine(1915) in 23S rRNA + S-adenosyl-L-homocysteine + H(+). Its function is as follows. Specifically methylates the pseudouridine at position 1915 (m3Psi1915) in 23S rRNA. This Acetivibrio thermocellus (strain ATCC 27405 / DSM 1237 / JCM 9322 / NBRC 103400 / NCIMB 10682 / NRRL B-4536 / VPI 7372) (Clostridium thermocellum) protein is Ribosomal RNA large subunit methyltransferase H.